Reading from the N-terminus, the 98-residue chain is NADH-ubiquinone oxidoreductase chain 4L (98 aa).

Helical transmembrane passes span 1 to 21, 25 to 45, and 67 to 87; these read MSLV…GLLM, HLMS…ILST, and AACE…TYGV.

It belongs to the complex I subunit 4L family. In terms of assembly, core subunit of respiratory chain NADH dehydrogenase (Complex I) which is composed of 45 different subunits.

The protein localises to the mitochondrion inner membrane. It catalyses the reaction a ubiquinone + NADH + 5 H(+)(in) = a ubiquinol + NAD(+) + 4 H(+)(out). In terms of biological role, core subunit of the mitochondrial membrane respiratory chain NADH dehydrogenase (Complex I) which catalyzes electron transfer from NADH through the respiratory chain, using ubiquinone as an electron acceptor. Part of the enzyme membrane arm which is embedded in the lipid bilayer and involved in proton translocation. The polypeptide is NADH-ubiquinone oxidoreductase chain 4L (MT-ND4L) (Talpa europaea (European mole)).